The following is a 132-amino-acid chain: MAVTHSVGDMLTKIRNASRVKHESVDLKMSKINKSILDILREEGYIKGYNIFDNKGISFIKAILNYDSKRNPAINRIDAISTPGRKVYSSYKNMPRIKNGYGILIVSSSKGVITGKQAKDNKVGGELICSVW.

This sequence belongs to the universal ribosomal protein uS8 family. As to quaternary structure, part of the 30S ribosomal subunit. Contacts proteins S5 and S12.

Functionally, one of the primary rRNA binding proteins, it binds directly to 16S rRNA central domain where it helps coordinate assembly of the platform of the 30S subunit. This Borrelia hermsii (strain HS1 / DAH) protein is Small ribosomal subunit protein uS8.